Consider the following 287-residue polypeptide: Ribonuclease Z (287 aa).

Zn(2+)-binding residues include H64, H66, D68, H69, H124, D191, and H250. Catalysis depends on D68, which acts as the Proton acceptor.

Belongs to the RNase Z family. As to quaternary structure, homodimer. Zn(2+) serves as cofactor.

The catalysed reaction is Endonucleolytic cleavage of RNA, removing extra 3' nucleotides from tRNA precursor, generating 3' termini of tRNAs. A 3'-hydroxy group is left at the tRNA terminus and a 5'-phosphoryl group is left at the trailer molecule.. In terms of biological role, zinc phosphodiesterase, which displays some tRNA 3'-processing endonuclease activity. Probably involved in tRNA maturation, by removing a 3'-trailer from precursor tRNA. The polypeptide is Ribonuclease Z (Pyrobaculum calidifontis (strain DSM 21063 / JCM 11548 / VA1)).